Here is a 209-residue protein sequence, read N- to C-terminus: Ras-like GTP-binding protein RYL2 (209 aa).

A GTP-binding site is contributed by 12–19 (GAQGVGKT). The Effector region signature appears at 34 to 42 (QASTIGASF). GTP is bound by residues 60–64 (DTAGQ) and 118–121 (TKVD). Residues cysteine 208 and cysteine 209 are each lipidated (S-geranylgeranyl cysteine).

It belongs to the small GTPase superfamily. Rab family.

Its subcellular location is the cell membrane. Functionally, protein transport. Probably involved in vesicular traffic. The protein is Ras-like GTP-binding protein RYL2 (RYL2) of Yarrowia lipolytica (strain CLIB 122 / E 150) (Yeast).